The chain runs to 219 residues: Transmembrane protein 125 (219 aa).

4 helical membrane passes run 36–56 (LCFV…VALL), 68–88 (LATG…QLMS), 114–134 (ALVV…LAGL), and 147–167 (MLSV…GLLL).

It localises to the membrane. This is Transmembrane protein 125 (TMEM125) from Homo sapiens (Human).